Reading from the N-terminus, the 209-residue chain is Orotate phosphoribosyltransferase (209 aa).

5-phospho-alpha-D-ribose 1-diphosphate is bound by residues R96, K100, H102, and 122 to 130; that span reads EDLISTGGS. Residue S126 participates in orotate binding.

The protein belongs to the purine/pyrimidine phosphoribosyltransferase family. PyrE subfamily. In terms of assembly, homodimer. It depends on Mg(2+) as a cofactor.

It carries out the reaction orotidine 5'-phosphate + diphosphate = orotate + 5-phospho-alpha-D-ribose 1-diphosphate. The protein operates within pyrimidine metabolism; UMP biosynthesis via de novo pathway; UMP from orotate: step 1/2. Catalyzes the transfer of a ribosyl phosphate group from 5-phosphoribose 1-diphosphate to orotate, leading to the formation of orotidine monophosphate (OMP). In Lactococcus lactis subsp. cremoris (strain SK11), this protein is Orotate phosphoribosyltransferase.